We begin with the raw amino-acid sequence, 156 residues long: Ribosomal RNA large subunit methyltransferase H (156 aa).

Residues L74, G105, and 124–129 (LSKLTL) each bind S-adenosyl-L-methionine.

This sequence belongs to the RNA methyltransferase RlmH family. In terms of assembly, homodimer.

Its subcellular location is the cytoplasm. The catalysed reaction is pseudouridine(1915) in 23S rRNA + S-adenosyl-L-methionine = N(3)-methylpseudouridine(1915) in 23S rRNA + S-adenosyl-L-homocysteine + H(+). Its function is as follows. Specifically methylates the pseudouridine at position 1915 (m3Psi1915) in 23S rRNA. This chain is Ribosomal RNA large subunit methyltransferase H, found in Legionella pneumophila (strain Paris).